The following is a 417-amino-acid chain: UDP-N-acetylglucosamine 1-carboxyvinyltransferase 2 (417 aa).

Phosphoenolpyruvate is bound at residue Lys22–Asn23. Arg94 provides a ligand contact to UDP-N-acetyl-alpha-D-glucosamine. Catalysis depends on Cys118, which acts as the Proton donor. The residue at position 118 (Cys118) is a 2-(S-cysteinyl)pyruvic acid O-phosphothioketal. UDP-N-acetyl-alpha-D-glucosamine contacts are provided by residues Arg123–Leu127, Asp306, and Ile328.

This sequence belongs to the EPSP synthase family. MurA subfamily.

The protein resides in the cytoplasm. It carries out the reaction phosphoenolpyruvate + UDP-N-acetyl-alpha-D-glucosamine = UDP-N-acetyl-3-O-(1-carboxyvinyl)-alpha-D-glucosamine + phosphate. The protein operates within cell wall biogenesis; peptidoglycan biosynthesis. Cell wall formation. Adds enolpyruvyl to UDP-N-acetylglucosamine. The chain is UDP-N-acetylglucosamine 1-carboxyvinyltransferase 2 from Clostridium tetani (strain Massachusetts / E88).